The primary structure comprises 61 residues: Cytotoxin 1 (61 aa).

4 disulfide bridges follow: C3-C22, C15-C39, C43-C54, and C55-C60.

Belongs to the three-finger toxin family. Short-chain subfamily. Type IB cytotoxin sub-subfamily. In terms of tissue distribution, expressed by the venom gland.

It is found in the secreted. Its function is as follows. This protein lyses red blood cells and has cardiotoxic and hypotensive activities. In Hemachatus haemachatus (Rinkhals), this protein is Cytotoxin 1.